A 602-amino-acid chain; its full sequence is DNA mismatch repair protein MutL (602 aa).

The interval 337–367 (KRPFPGSSTNYSGIQQDTKKQESDNPEKARG) is disordered. The span at 342–352 (GSSTNYSGIQQ) shows a compositional bias: polar residues. Basic and acidic residues predominate over residues 353 to 367 (DTKKQESDNPEKARG).

This sequence belongs to the DNA mismatch repair MutL/HexB family.

Its function is as follows. This protein is involved in the repair of mismatches in DNA. It is required for dam-dependent methyl-directed DNA mismatch repair. May act as a 'molecular matchmaker', a protein that promotes the formation of a stable complex between two or more DNA-binding proteins in an ATP-dependent manner without itself being part of a final effector complex. The chain is DNA mismatch repair protein MutL from Kosmotoga olearia (strain ATCC BAA-1733 / DSM 21960 / TBF 19.5.1).